The following is a 635-amino-acid chain: Probable clathrin assembly protein At4g32285 (635 aa).

The ENTH domain maps to 23–159 (VASNMAPDLE…ELALFERRGR (137 aa)). The disordered stretch occupies residues 157 to 208 (RGRNGGGSSSSHQSNGDDGYNRSRDDFRSPPPRTYDYETGNGFGMPKRSRSF). Residues 165–174 (SSSHQSNGDD) are compositionally biased toward low complexity. A compositionally biased stretch (basic and acidic residues) spans 175–184 (GYNRSRDDFR). At Ser207 the chain carries Phosphoserine. At Thr224 the chain carries Phosphothreonine. The span at 357 to 369 (AKRAKSPERKEIE) shows a compositional bias: basic and acidic residues. The interval 357–412 (AKRAKSPERKEIEAPPAPAPPVEEPVDMNEIKALPPPENHTPPPPPAPEPKPQQPQ) is disordered. The span at 390–409 (LPPPENHTPPPPPAPEPKPQ) shows a compositional bias: pro residues.

It localises to the membrane. The protein localises to the clathrin-coated pit. The protein resides in the golgi apparatus. It is found in the cytoplasmic vesicle. Its subcellular location is the clathrin-coated vesicle. The protein is Probable clathrin assembly protein At4g32285 of Arabidopsis thaliana (Mouse-ear cress).